We begin with the raw amino-acid sequence, 161 residues long: ATP synthase subunit b 2 (161 aa).

A helical transmembrane segment spans residues 13–33 (IVWLVIALVAMYFVMSRLAIP).

This sequence belongs to the ATPase B chain family. F-type ATPases have 2 components, F(1) - the catalytic core - and F(0) - the membrane proton channel. F(1) has five subunits: alpha(3), beta(3), gamma(1), delta(1), epsilon(1). F(0) has three main subunits: a(1), b(2) and c(10-14). The alpha and beta chains form an alternating ring which encloses part of the gamma chain. F(1) is attached to F(0) by a central stalk formed by the gamma and epsilon chains, while a peripheral stalk is formed by the delta and b chains.

It is found in the cell inner membrane. Its function is as follows. F(1)F(0) ATP synthase produces ATP from ADP in the presence of a proton or sodium gradient. F-type ATPases consist of two structural domains, F(1) containing the extramembraneous catalytic core and F(0) containing the membrane proton channel, linked together by a central stalk and a peripheral stalk. During catalysis, ATP synthesis in the catalytic domain of F(1) is coupled via a rotary mechanism of the central stalk subunits to proton translocation. Component of the F(0) channel, it forms part of the peripheral stalk, linking F(1) to F(0). The b'-subunit is a diverged and duplicated form of b found in plants and photosynthetic bacteria. This Rhodospirillum rubrum (strain ATCC 11170 / ATH 1.1.1 / DSM 467 / LMG 4362 / NCIMB 8255 / S1) protein is ATP synthase subunit b 2 (atpF2).